The sequence spans 368 residues: 3-dehydroquinate synthase (368 aa).

NAD(+) contacts are provided by residues 112–116, 136–137, Lys-149, Lys-158, and 176–179; these read GVVGD, TT, and FLDT. Residues Glu-191, His-257, and His-274 each contribute to the Zn(2+) site.

Belongs to the sugar phosphate cyclases superfamily. Dehydroquinate synthase family. Co(2+) serves as cofactor. It depends on Zn(2+) as a cofactor. The cofactor is NAD(+).

The protein resides in the cytoplasm. The enzyme catalyses 7-phospho-2-dehydro-3-deoxy-D-arabino-heptonate = 3-dehydroquinate + phosphate. It functions in the pathway metabolic intermediate biosynthesis; chorismate biosynthesis; chorismate from D-erythrose 4-phosphate and phosphoenolpyruvate: step 2/7. In terms of biological role, catalyzes the conversion of 3-deoxy-D-arabino-heptulosonate 7-phosphate (DAHP) to dehydroquinate (DHQ). This Natranaerobius thermophilus (strain ATCC BAA-1301 / DSM 18059 / JW/NM-WN-LF) protein is 3-dehydroquinate synthase.